We begin with the raw amino-acid sequence, 310 residues long: Vomeronasal type-1 receptor 53 (310 aa).

Topologically, residues 1-20 are extracellular; that stretch reads MNKANLLHTDINLKITLFSE. The helical transmembrane segment at 21–41 threads the bilayer; the sequence is VSVGISANSILIFAHLCMLLG. The Cytoplasmic segment spans residues 42-50; it reads ENRPKPIDL. Residues 51–71 form a helical membrane-spanning segment; it reads YIAFFSLTQLMLLITMGLIAV. The Extracellular segment spans residues 72-93; it reads DMFMPWGRWDSTTCQSLIYLHR. An intrachain disulfide couples C85 to C172. A helical membrane pass occupies residues 94 to 114; that stretch reads LLRGLTLSATCLLNVLWTITL. Topologically, residues 115–134 are cytoplasmic; sequence SPRSSCLTKFKHKSLQHISC. The helical transmembrane segment at 135 to 155 threads the bilayer; sequence AFLFLCVLYMSFNSHLFISII. The Extracellular segment spans residues 156–183; sequence AYPNLTLENFMYVTQSCSLIPLSYFRKS. N159 carries an N-linked (GlcNAc...) asparagine glycan. Residues 184–204 traverse the membrane as a helical segment; the sequence is MFSIPMAIREALLIGLMALSG. Topologically, residues 205-238 are cytoplasmic; sequence GYMVAHLWRHKKQAQHLHRTSLSSKASPEQRATR. Residues 239 to 259 form a helical membrane-spanning segment; sequence TIMLLMSFFVVLYILDLVIFH. Over 260–268 the chain is Extracellular; sequence SRMKFKDGS. A helical transmembrane segment spans residues 269 to 289; sequence ILYGVQIIVSHSYATVSPFVF. Over 290 to 310 the chain is Cytoplasmic; the sequence is ICTEKRITNFLRSMCGRIVNI.

The protein belongs to the G-protein coupled receptor 1 family.

The protein resides in the cell membrane. In terms of biological role, putative pheromone receptor implicated in the regulation of social and reproductive behavior. The polypeptide is Vomeronasal type-1 receptor 53 (Vmn1r53) (Mus musculus (Mouse)).